A 285-amino-acid polypeptide reads, in one-letter code: Para-Rep C6 (285 aa).

In terms of domain architecture, CRESS-DNA virus Rep endonuclease spans 3–99 (TRQSTSWVFT…VAGPWEYGLF (97 aa)). The RCR-1 motif lies at 10-13 (VFTL). Residues glutamate 36 and histidine 42 each contribute to the a divalent metal cation site. The RCR-2 signature appears at 42–44 (HLQ). Positions 52–74 (RNTTLRQAKYIFNGLNPHLEIAR) match the Nuclear localization signal motif. The For DNA cleavage activity role is filled by tyrosine 82. The RCR-3 motif lies at 82 to 85 (YAMK). Aspartate 87 serves as a coordination point for a divalent metal cation. The Nuclear localization signal signature appears at 99 to 105 (FIKRGSH). 175 to 183 (GPAGNEGKS) contacts ATP.

It belongs to the nanoviridea/circoviridae replication-associated protein family. In terms of assembly, homooligomer (Potential). Rep binds to repeated DNA motifs (iterons). The cofactor is Mg(2+). Mn(2+) serves as cofactor.

The protein resides in the host nucleus. It carries out the reaction ATP + H2O = ADP + phosphate + H(+). Its function is as follows. Initiates and terminates the replication only of its own subviral DNA molecule. The closed circular ssDNA genome is first converted to a superhelical dsDNA. Rep binds a specific hairpin at the genome origin of replication. Introduces an endonucleolytic nick within the intergenic region of the genome, thereby initiating the rolling circle replication (RCR). Following cleavage, binds covalently to the 5'-phosphate of DNA as a tyrosyl ester. The cleavage gives rise to a free 3'-OH that serves as a primer for the cellular DNA polymerase. The polymerase synthesizes the (+) strand DNA by rolling circle mechanism. After one round of replication, a Rep-catalyzed nucleotidyl transfer reaction releases a circular single-stranded virus genome, thereby terminating the replication. Displays origin-specific DNA cleavage, nucleotidyl transferase, ATPase and helicase activities. The sequence is that of Para-Rep C6 (C6) from Subterranean clover stunt C6 alphasatellite (SCSC6A).